A 316-amino-acid polypeptide reads, in one-letter code: Annexin A13 (316 aa).

G2 is lipidated: N-myristoyl glycine. Annexin repeat units lie at residues 14–85 (FDVD…ALLD), 86–157 (RPSE…SLLQ), 169–241 (DLAG…TLVR), and 245–316 (DCED…ALLH).

This sequence belongs to the annexin family. In terms of assembly, monomer and homodimer. In terms of tissue distribution, detected in epithelial cells in colon and jejunum (at protein level). Detected in epithelial cells in jejunum.

The protein resides in the apical cell membrane. The protein localises to the cell membrane. It localises to the cytoplasmic vesicle. Binds to membranes enriched in phosphatidylserine or phosphatidylglycerol in a calcium-dependent manner. Half-maximal membrane binding requires about 60 uM calcium. Does not bind to membranes that lack phospholipids with an acidic headgroup. In terms of biological role, binds to membranes enriched in phosphatidylserine or phosphatidylglycerol in a calcium-dependent manner, but requires higher calcium levels for membrane binding than isoform A. Half-maximal membrane binding requires about 320 uM calcium. In Homo sapiens (Human), this protein is Annexin A13 (ANXA13).